The primary structure comprises 763 residues: Ribonucleoside-diphosphate reductase subunit alpha (763 aa).

The 91-residue stretch at 5–95 (LFVTKRNGKK…IFHLRKKAYG (91 aa)) folds into the ATP-cone domain. ATP contacts are provided by residues K9, 15–21 (EKINLDK), T55, and K91. T209 is a GDP binding site. C225 and C462 are oxidised to a cystine. DTTP is bound by residues 232-234 (DNL), R262, and R269. N437 contacts GDP. N437 serves as the catalytic Proton acceptor. C439 (cysteine radical intermediate) is an active-site residue. Residues E441 and 623–625 (ETS) contribute to the GDP site. The active-site Proton acceptor is E441.

The protein belongs to the ribonucleoside diphosphate reductase large chain family. In terms of assembly, tetramer of two alpha and two beta subunits.

It carries out the reaction a 2'-deoxyribonucleoside 5'-diphosphate + [thioredoxin]-disulfide + H2O = a ribonucleoside 5'-diphosphate + [thioredoxin]-dithiol. With respect to regulation, under complex allosteric control mediated by deoxynucleoside triphosphates and ATP binding to separate specificity and activation sites on the alpha subunit. The type of nucleotide bound at the specificity site determines substrate preference. It seems probable that ATP makes the enzyme reduce CDP and UDP, dGTP favors ADP reduction and dTTP favors GDP reduction. Stimulated by ATP and inhibited by dATP binding to the activity site. Provides the precursors necessary for DNA synthesis. Catalyzes the biosynthesis of deoxyribonucleotides from the corresponding ribonucleotides. The sequence is that of Ribonucleoside-diphosphate reductase subunit alpha (nrdA) from Buchnera aphidicola subsp. Schizaphis graminum (strain Sg).